The following is a 158-amino-acid chain: UPF0735 ACT domain-containing protein Bsph_3944 (158 aa).

One can recognise an ACT domain in the interval 80–155; it reads TVFLQLQDRK…FVESAEVISS (76 aa).

The protein belongs to the UPF0735 family.

The chain is UPF0735 ACT domain-containing protein Bsph_3944 from Lysinibacillus sphaericus (strain C3-41).